The following is a 141-amino-acid chain: Nucleoside triphosphatase NudI (141 aa).

The Nudix hydrolase domain occupies 1-141 (MRQRTIVCPL…RHTLALKGLL (141 aa)). A Nudix box motif is present at residues 38–59 (GGVEPGERIEEALRREIREELG).

The protein belongs to the Nudix hydrolase family. NudI subfamily. As to quaternary structure, monomer. Mg(2+) is required as a cofactor.

It catalyses the reaction a ribonucleoside 5'-triphosphate + H2O = a ribonucleoside 5'-phosphate + diphosphate + H(+). The catalysed reaction is a 2'-deoxyribonucleoside 5'-triphosphate + H2O = a 2'-deoxyribonucleoside 5'-phosphate + diphosphate + H(+). The enzyme catalyses dUTP + H2O = dUMP + diphosphate + H(+). It carries out the reaction dTTP + H2O = dTMP + diphosphate + H(+). It catalyses the reaction dCTP + H2O = dCMP + diphosphate + H(+). In terms of biological role, catalyzes the hydrolysis of nucleoside triphosphates, with a preference for pyrimidine deoxynucleoside triphosphates (dUTP, dTTP and dCTP). The chain is Nucleoside triphosphatase NudI from Salmonella newport (strain SL254).